Reading from the N-terminus, the 396-residue chain is S-adenosylmethionine synthase (396 aa).

Residue His16 coordinates ATP. Asp18 is a Mg(2+) binding site. Glu44 serves as a coordination point for K(+). Residues Glu57 and Gln100 each contribute to the L-methionine site. Positions 100 to 110 (QSVDIAQGVDR) are flexible loop. Residues 165-167 (DAK), Asp240, 246-247 (RK), Ala263, and Lys267 each bind ATP. Residue Asp240 participates in L-methionine binding. Residue Lys271 coordinates L-methionine.

This sequence belongs to the AdoMet synthase family. In terms of assembly, homotetramer; dimer of dimers. Requires Mg(2+) as cofactor. The cofactor is K(+).

Its subcellular location is the cytoplasm. It carries out the reaction L-methionine + ATP + H2O = S-adenosyl-L-methionine + phosphate + diphosphate. It functions in the pathway amino-acid biosynthesis; S-adenosyl-L-methionine biosynthesis; S-adenosyl-L-methionine from L-methionine: step 1/1. Its function is as follows. Catalyzes the formation of S-adenosylmethionine (AdoMet) from methionine and ATP. The overall synthetic reaction is composed of two sequential steps, AdoMet formation and the subsequent tripolyphosphate hydrolysis which occurs prior to release of AdoMet from the enzyme. The chain is S-adenosylmethionine synthase from Pseudomonas syringae pv. tomato (strain ATCC BAA-871 / DC3000).